Reading from the N-terminus, the 80-residue chain is Serine palmitoyltransferase small subunit B (80 aa).

The Cytoplasmic segment spans residues 1–11; that stretch reads MDVKHIKDYLS. Residues 12–29 traverse the membrane as a helical segment; sequence WLYYQYLLITCSYVLEPW. Over 30–36 the chain is Lumenal; sequence EQSIFNT. The chain crosses the membrane as a helical span at residues 37-57; it reads LLLTIIAMVIYSSYIFIPIHV. The Cytoplasmic portion of the chain corresponds to 58 to 80; it reads RLAVEFFSRIFGGQHESTVALMS.

It belongs to the SPTSS family. SPTSSB subfamily. Component of the serine palmitoyltransferase (SPT) complex, which is composed of SPTLC1, SPTLC2 or SPTLC3 and SPTSSA or SPTSSB. The heterodimer consisting of SPTLC1 and SPTLC2/SPTLC3 forms the catalytic core of the enzyme, while SPTSSA or SPTSSB subunits determine substrate specificity. SPT also interacts with ORMDL proteins, especially ORMDL3, which negatively regulate SPT activity in the presence of ceramides.

The protein resides in the endoplasmic reticulum membrane. It functions in the pathway lipid metabolism; sphingolipid metabolism. Its function is as follows. Component of the serine palmitoyltransferase multisubunit enzyme (SPT) that catalyzes the initial and rate-limiting step in sphingolipid biosynthesis by condensing L-serine and activated acyl-CoA (most commonly palmitoyl-CoA) to form long-chain bases. The SPT complex is composed of SPTLC1, SPTLC2 or SPTLC3 and SPTSSA or SPTSSB. Within this complex, the heterodimer consisting of SPTLC1 and SPTLC2/SPTLC3 forms the catalytic core. Within the SPT complex, SPTSSB stimulates the catalytic activity and plays a role in substrate specificity. SPT complexes with this subunit showing a preference for longer acyl-CoAs. The SPTLC1-SPTLC2-SPTSSB complex shows a strong preference for C18-CoA substrate, while the SPTLC1-SPTLC3-SPTSSB isozyme displays an ability to use a broader range of acyl-CoAs, without apparent preference. The protein is Serine palmitoyltransferase small subunit B (sptssb) of Xenopus laevis (African clawed frog).